The primary structure comprises 57 residues: Toxin GhoT (57 aa).

Transmembrane regions (helical) follow at residues 7–27 (ILIF…FISH) and 37–57 (AFLV…FSLF).

This sequence belongs to the GhoT/OrtT toxin family.

It is found in the cell inner membrane. Its function is as follows. Toxic component of a type V toxin-antitoxin (TA) system. Causes membrane damage when induced by MqsR, slowing cell growth and leading to the formation of dormant persister cells; involved with GhoS, its antitoxin, in reducing cell growth during antibacterial stress. Its toxic effects are neutralized by GhoS, which digests ghoT transcripts in a sequence-specific manner. This chain is Toxin GhoT, found in Escherichia coli O157:H7.